A 490-amino-acid chain; its full sequence is Glucose-6-phosphate 1-dehydrogenase (490 aa).

Residues Arg49, 91–92 (DV), and Lys146 each bind NADP(+). The substrate site is built by His176, Lys180, Glu214, and Asp233. The active-site Proton acceptor is the His238. Substrate is bound by residues Lys338 and Lys343.

Belongs to the glucose-6-phosphate dehydrogenase family.

The enzyme catalyses D-glucose 6-phosphate + NADP(+) = 6-phospho-D-glucono-1,5-lactone + NADPH + H(+). The protein operates within carbohydrate degradation; pentose phosphate pathway; D-ribulose 5-phosphate from D-glucose 6-phosphate (oxidative stage): step 1/3. Its function is as follows. Catalyzes the oxidation of glucose 6-phosphate to 6-phosphogluconolactone. In Buchnera aphidicola subsp. Schizaphis graminum (strain Sg), this protein is Glucose-6-phosphate 1-dehydrogenase.